The sequence spans 376 residues: Protein-tyrosine sulfotransferase 2 (376 aa).

Residues 1 to 8 (MRLSVRKV) are Cytoplasmic-facing. The chain crosses the membrane as a helical; Signal-anchor for type II membrane protein span at residues 9–25 (LLAVGCALALVLAVQLG). Residues 26–376 (QQVLECRAVL…NSTSPHLGSS (351 aa)) are Lumenal-facing. A 3'-phosphoadenylyl sulfate-binding site is contributed by 77–81 (RSGTT). C95 and C155 are disulfide-bonded. The active-site Proton donor/acceptor is the E98. The segment at 100-104 (RIIPR) is interaction with peptide substrate. Residues R182, S190, and R194 each contribute to the 3'-phosphoadenylyl sulfate site. C224 and C232 are joined by a disulfide. 3'-phosphoadenylyl sulfate-binding positions include Y237, 284–293 (STDQVIKPVN), and K299. Residues N342 and N367 are each glycosylated (N-linked (GlcNAc...) asparagine).

Belongs to the protein sulfotransferase family. In terms of assembly, homodimer. Can also form heterodimers with TPST1. N-glycosylated.

It localises to the golgi apparatus membrane. It carries out the reaction L-tyrosyl-[protein] + 3'-phosphoadenylyl sulfate = O-sulfo-L-tyrosine-[protein] + adenosine 3',5'-bisphosphate + H(+). Functionally, catalyzes the O-sulfation of tyrosine residues within acidic motifs of polypeptides, using 3'-phosphoadenylyl sulfate (PAPS) as cosubstrate. The chain is Protein-tyrosine sulfotransferase 2 (Tpst2) from Rattus norvegicus (Rat).